Reading from the N-terminus, the 217-residue chain is MARKGILGTKLGMTQVFDENNKVVPVTVVKAGPNVVTRIRTTERDGYSAVQLAYGEISPRKVIKPVAGQFAAAGVNPRRHVAELRLDDEAAVAEYEVGQELTAEIFSDGAYVDVTGTSKGKGFAGTMKRHGFRGQGAAHGAQAVHRRPGSIGGCATPGRVFKGTRMSGRMGNDRVTTQNLKVHKVDAENGVLLIKGAIPGRNGGLVVVRSAIKRGEK.

Belongs to the universal ribosomal protein uL3 family. In terms of assembly, part of the 50S ribosomal subunit. Forms a cluster with proteins L14 and L19.

One of the primary rRNA binding proteins, it binds directly near the 3'-end of the 23S rRNA, where it nucleates assembly of the 50S subunit. This Mycolicibacterium smegmatis (strain ATCC 700084 / mc(2)155) (Mycobacterium smegmatis) protein is Large ribosomal subunit protein uL3.